A 279-amino-acid chain; its full sequence is Large ribosomal subunit protein uL2 (279 aa).

Composition is skewed to basic residues over residues 211-221 (GRSRWRGKTPH) and 256-279 (SYGK…RKGK). A disordered region spans residues 211–279 (GRSRWRGKTP…KFIVRGRKGK (69 aa)).

This sequence belongs to the universal ribosomal protein uL2 family. Part of the 50S ribosomal subunit. Forms a bridge to the 30S subunit in the 70S ribosome.

In terms of biological role, one of the primary rRNA binding proteins. Required for association of the 30S and 50S subunits to form the 70S ribosome, for tRNA binding and peptide bond formation. It has been suggested to have peptidyltransferase activity; this is somewhat controversial. Makes several contacts with the 16S rRNA in the 70S ribosome. The polypeptide is Large ribosomal subunit protein uL2 (Oenococcus oeni (strain ATCC BAA-331 / PSU-1)).